Reading from the N-terminus, the 457-residue chain is Cyclic dof factor 2 (457 aa).

Residues 1–130 (MADPAIKLFG…GGTACSQEGK (130 aa)) are disordered. Polar residues predominate over residues 22-35 (DSSSSYTGFLTETQ). Acidic residues-rich tracts occupy residues 45–54 (TGDDDDEEMG) and 62–73 (EGDDVGDGGGES). Composition is skewed to basic and acidic residues over residues 74 to 94 (ETDKKEEKDSECQEESLRNES) and 106 to 118 (EKTETTKAAKTNE). The segment at 138 to 192 (LPCPRCNSMETKFCYYNNYNVNQPRHFCKKCQRYWTAGGTMRNVPVGAGRRKNKS) adopts a Dof-type zinc-finger fold. Zn(2+)-binding residues include cysteine 140, cysteine 143, cysteine 165, and cysteine 168. 2 disordered regions span residues 334–377 (QPNS…KSKP) and 417–457 (AFRS…HESS). Residues 337-346 (SPSGSNPNSP) are compositionally biased toward low complexity.

Interacts with ADO2 (via kelch repeats) and ADO3 (via kelch repeats). As to expression, expressed in the vasculature of cotyledons and hypocotyls, leaves and roots.

It is found in the nucleus. Functionally, transcription factor that binds specifically to a 5'-AA[AG]G-3' consensus core sequence. Regulates a photoperiodic flowering response. Transcriptional repressor of 'CONSTANS' expression. The stability of CDF2 is controlled by 'GIGANTEA' and redundantly by ADO3, ADO2 and/or ADO1. In Arabidopsis thaliana (Mouse-ear cress), this protein is Cyclic dof factor 2 (CDF2).